Reading from the N-terminus, the 71-residue chain is uncharacterized protein (71 aa).

The first 26 residues, 1 to 26 (MIKFSVILGMIRCSLTHITTKNTVNA), serve as a signal peptide directing secretion.

This is an uncharacterized protein from Bacillus subtilis (strain 168).